Here is a 422-residue protein sequence, read N- to C-terminus: MDFWLWLLYFLPVSGALRVLPEVQLNVEWGGSIIIECPLPQLHVRMYLCRQMAKPGICSTVVSNTFVKKEYERRVTLTPCLDKKLFLVEMTQLTENDDGIYACGVGMKTDKGKTQKITLNVHNEYPEPFWEDEWTSERPRWLHRFLQHQMPWLHGSEHPSSSGVIAKVTTPAPKTEAPPVHQPSSITSVTQHPRVYRAFSVSATKSPALLPATTASKTSTQQAIRPLEASYSHHTRLHEQRTRHHGPHYGREDRGLHIPIPEFHILIPTFLGFLLLVLLGLVVKRAIQRRRASSRRAGRLAMRRRGRGASRPFPTQRRDASQRPRSQNNVYSACPRRARGPDSLGPAEAPLLNAPASASPASPQVLEAPWPHTPSLKMSCEYVSLGYQPAVNLEDPDSDDYINIPDPSHLPSYAPGPRSSCP.

Residues 1–16 (MDFWLWLLYFLPVSGA) form the signal peptide. Residues 18–262 (RVLPEVQLNV…DRGLHIPIPE (245 aa)) are Extracellular-facing. Residues 24 to 121 (QLNVEWGGSI…GKTQKITLNV (98 aa)) enclose the Ig-like domain. 2 disulfide bridges follow: C37–C103 and C49–C58. T91 carries the post-translational modification Phosphothreonine. Residues 263–283 (FHILIPTFLGFLLLVLLGLVV) form a helical membrane-spanning segment. At 284–422 (KRAIQRRRAS…YAPGPRSSCP (139 aa)) the chain is on the cytoplasmic side. Residues 290–308 (RRASSRRAGRLAMRRRGRG) are compositionally biased toward basic residues. 2 disordered regions span residues 290-367 (RRAS…QVLE) and 391-422 (VNLE…SSCP). Positions 344 to 363 (LGPAEAPLLNAPASASPASP) are enriched in low complexity.

As to quaternary structure, interacts (via Ig-like domain) with IGHM (via CH4/Cmu4 domain), both secreted and membrane-bound IgM; the interaction is glycan-independent and multivalent theoretically involving up to eight binding sites for the IgM pentamer. Phosphorylated on both Tyr and Ser residues. Post-translationally, O-glycosylated. Sialylated. O-linked glycans regulate trafficking to the plasma membrane. In terms of tissue distribution, expressed in pre-B cells, immature and mature B cells residing in primary and secondary lymphoid organs (at protein level). In the spleen, highly expressed in follicular and marginal zone B cells and at lower levels in germinal center B cells and plasma cells. Expressed in splenic dendritic cells and in granulocytes. In the peritoneum, expressed in B1-a and B-2 cell lineages. In the bone marrow, expressed in immature B cells and at a lower level in pro- and pre-B cells (at protein level). Expressed in M cells (at protein level).

The protein localises to the cell membrane. It localises to the early endosome membrane. The protein resides in the golgi apparatus. It is found in the trans-Golgi network membrane. Its subcellular location is the lysosome membrane. Its function is as follows. High-affinity Fc receptor for immunoglobulin M (IgM), both secreted and membrane-bound IgM. Primarily regulates IgM transport and homeostasis. In lymphoid cells, enables exocytosis of membrane-bound IgM on the plasma membrane as well as endocytosis of IgM-antigen complexes toward lysosomes for degradation. In mucosal epithelium, mediates retrotranscytosis of antigen-IgM complexes across mucosal M cells toward antigen-presenting cells in mucosal lymphoid tissues. Triggers costimulatory signaling and mediates most of IgM effector functions involved in B cell development and primary immune response to infection. Likely limits tonic IgM BCR signaling to self-antigens for proper negative selection of autoreactive B cells in the bone marrow and for the maintenance of regulatory B cell pool in peripheral lymphoid organs. Mediates antibody responses to T cell-dependent and T cell-independent antigens and promotes induction of an efficient neutralizing IgG response. Engages in cross-talk with antigen-receptor signaling via the non-canonical NF-kappa-B, MAP kinases and calcium signaling pathways. This is Immunoglobulin mu Fc receptor from Mus musculus (Mouse).